The following is a 414-amino-acid chain: Poly(3-hydroxyalkanoate) depolymerase C (414 aa).

An N-terminal signal peptide occupies residues 1 to 37; the sequence is MLAKQIKKANSRSTLLRKSLLFAAPIILAVSSSSVYA. Residue Ser154 is the Charge relay system of the active site.

This sequence belongs to the AB hydrolase superfamily. Lipase family.

The protein localises to the secreted. Its function is as follows. Specific for poly(hydroxyalkanoic acid) consisting of monomers of four or five carbon atoms and for P-nitrophenylbutyrate as substrates. The sequence is that of Poly(3-hydroxyalkanoate) depolymerase C (phaZ1) from Paucimonas lemoignei (Pseudomonas lemoignei).